A 145-amino-acid polypeptide reads, in one-letter code: Shadow of prion protein (145 aa).

A signal peptide spans Met1–Ala24. Asn105 is a glycosylation site (N-linked (GlcNAc...) asparagine). A lipid anchor (GPI-anchor amidated serine) is attached at Ser119. A propeptide spans Gly120 to Pro145 (removed in mature form).

Belongs to the SPRN family. In terms of processing, N-glycosylated. Mainly expressed in brain.

The protein localises to the cell membrane. Its function is as follows. Prion-like protein that has PrP(C)-like neuroprotective activity. May act as a modulator for the biological actions of normal and abnormal PrP. This Ovis aries (Sheep) protein is Shadow of prion protein (SPRN).